The following is a 331-amino-acid chain: N-acetyl-alpha-D-glucosaminyl-diphospho-ditrans,octacis-undecaprenol 4-epimerase (331 aa).

Residues Phe13 to Val14, Gln34 to Tyr39, Asp47 to Val48, Ser109, Tyr132, and Lys136 contribute to the NAD(+) site. Substrate-binding residues include Ser109 and Tyr132. Tyr132 serves as the catalytic Proton acceptor. Substrate contacts are provided by residues Gly183–Lys184 and Tyr199–Gly201.

Belongs to the NAD(P)-dependent epimerase/dehydratase family. The cofactor is NAD(+).

Its subcellular location is the cell membrane. The enzyme catalyses N-acetyl-alpha-D-glucosaminyl-di-trans,octa-cis-undecaprenyl diphosphate = N-acetyl-alpha-D-galactosaminyl-di-trans,octa-cis-undecaprenyl diphosphate. Its pathway is bacterial outer membrane biogenesis; LPS O-antigen biosynthesis. Functionally, involved in biosynthesis of the repeating tetrasaccharide unit of the O-antigen. Catalyzes the reversible epimerization of the hydroxyl group at position C4 of undecaprenyl pyrophosphate-N-acetylglucosamine (UndPP-GlcNAc) to yield undecaprenyl pyrophosphate-N-acetylgalactosamine (UndPP-GalNAc). The polypeptide is N-acetyl-alpha-D-glucosaminyl-diphospho-ditrans,octacis-undecaprenol 4-epimerase (Escherichia coli O157:H7).